The primary structure comprises 60 residues: Large ribosomal subunit protein uL30 (60 aa).

This sequence belongs to the universal ribosomal protein uL30 family. Part of the 50S ribosomal subunit.

In Desulforapulum autotrophicum (strain ATCC 43914 / DSM 3382 / VKM B-1955 / HRM2) (Desulfobacterium autotrophicum), this protein is Large ribosomal subunit protein uL30.